Reading from the N-terminus, the 102-residue chain is Large ribosomal subunit protein bL21 (102 aa).

It belongs to the bacterial ribosomal protein bL21 family. In terms of assembly, part of the 50S ribosomal subunit. Contacts protein L20.

This protein binds to 23S rRNA in the presence of protein L20. The polypeptide is Large ribosomal subunit protein bL21 (Azorhizobium caulinodans (strain ATCC 43989 / DSM 5975 / JCM 20966 / LMG 6465 / NBRC 14845 / NCIMB 13405 / ORS 571)).